The sequence spans 50 residues: MMSRYAKCLKMHSVISYCVKYLKPRIFYKFGAFLTVNNKRGEGNKWKSII.

This is an uncharacterized protein from Bacillus subtilis (strain 168).